We begin with the raw amino-acid sequence, 1853 residues long: Cellulosomal-scaffolding protein A (1853 aa).

A signal peptide spans 1–28; it reads MRKVISMLLVVAMLTTIFAAMIPQTVSA. Cohesin domains lie at 29–182 and 183–322; these read ATMT…VPSD and GVVV…VNVG. Linker (Pro/Thr-rich) regions lie at residues 323–363 and 523–559; these read NATP…PANT and GGSVVPSTQPVTTPPATTKPPATTKPPATTIPPSDDP. Residues 323-364 are compositionally biased toward low complexity; that stretch reads NATPTKGATPTNTATPTKSATATPTRPSVPTNTPTNTPANTP. Disordered stretches follow at residues 323-367 and 525-559; these read NATP…PVSG and SVVPSTQPVTTPPATTKPPATTKPPATTIPPSDDP. The 159-residue stretch at 365–523 folds into the CBM3 domain; that stretch reads VSGNLKVEFY…GVLVWGKEPG (159 aa). Residues 525-555 are compositionally biased toward low complexity; the sequence is SVVPSTQPVTTPPATTKPPATTKPPATTIPP. 7 Cohesin domains span residues 560-704, 724-866, 889-1031, 1054-1196, 1219-1361, 1384-1526, and 1548-1690; these read NAIK…NVGD, AVRI…VNVG, and KLTL…VLVT. The 68-residue stretch at 1785–1852 folds into the Dockerin domain; sequence IMMWVGDIVK…FGATSSDYDA (68 aa).

Post-translationally, O-glycosylated on most but not all Thr residues of the linker units. The reducing sugar is galactopyranose.

The protein resides in the secreted. Functionally, acts as a scaffolding protein in the cellulosome. It promotes binding of cellulose to the catalytic domains of the cellulolytic enzymes. The chain is Cellulosomal-scaffolding protein A (cipA) from Acetivibrio thermocellus (strain ATCC 27405 / DSM 1237 / JCM 9322 / NBRC 103400 / NCIMB 10682 / NRRL B-4536 / VPI 7372) (Clostridium thermocellum).